Consider the following 334-residue polypeptide: Peroxidase 65 (334 aa).

An N-terminal signal peptide occupies residues 1 to 28 (MSNMQFSRGFNPFVILFCLAVVAPIISA). Disulfide bonds link cysteine 42–cysteine 123, cysteine 75–cysteine 80, cysteine 129–cysteine 326, and cysteine 208–cysteine 236. Histidine 73 serves as the catalytic Proton acceptor. Ca(2+) is bound by residues aspartate 74, glycine 79, aspartate 81, and serine 83. Proline 171 is a binding site for substrate. Asparagine 174 carries N-linked (GlcNAc...) asparagine glycosylation. Histidine 201 contributes to the heme b binding site. Threonine 202 lines the Ca(2+) pocket. N-linked (GlcNAc...) asparagine glycosylation is present at asparagine 238. Residues aspartate 250, threonine 253, and aspartate 258 each contribute to the Ca(2+) site. N-linked (GlcNAc...) asparagine glycosylation is found at asparagine 282 and asparagine 294.

It belongs to the peroxidase family. Classical plant (class III) peroxidase subfamily. Requires heme b as cofactor. The cofactor is Ca(2+).

The protein localises to the secreted. The enzyme catalyses 2 a phenolic donor + H2O2 = 2 a phenolic radical donor + 2 H2O. In terms of biological role, removal of H(2)O(2), oxidation of toxic reductants, biosynthesis and degradation of lignin, suberization, auxin catabolism, response to environmental stresses such as wounding, pathogen attack and oxidative stress. These functions might be dependent on each isozyme/isoform in each plant tissue. This is Peroxidase 65 (PER65) from Arabidopsis thaliana (Mouse-ear cress).